A 388-amino-acid polypeptide reads, in one-letter code: Na(+)/H(+) antiporter NhaA (388 aa).

Helical transmembrane passes span 14-34, 59-79, 95-115, 125-145, 154-174, 179-199, 219-239, 254-274, 292-312, 328-348, and 360-380; these read GGII…MGAT, MLLW…GLEV, AFPV…YLAF, GWAI…ALLG, IFLM…IALF, LSIV…LLNL, VLKS…FIPL, VLHP…NAGV, IIAG…WLAL, IMAV…IASL, and WAKL…YSWL.

Belongs to the NhaA Na(+)/H(+) (TC 2.A.33) antiporter family.

It is found in the cell inner membrane. The enzyme catalyses Na(+)(in) + 2 H(+)(out) = Na(+)(out) + 2 H(+)(in). In terms of biological role, na(+)/H(+) antiporter that extrudes sodium in exchange for external protons. This Salmonella paratyphi A (strain ATCC 9150 / SARB42) protein is Na(+)/H(+) antiporter NhaA.